Here is a 397-residue protein sequence, read N- to C-terminus: Succinate--CoA ligase [ADP-forming] subunit beta (397 aa).

In terms of domain architecture, ATP-grasp spans 9–254; that stretch reads KALLKGYGAP…ETEEDAKEIE (246 aa). ATP is bound by residues lysine 46, 53–55, glutamate 109, alanine 112, and glutamate 117; that span reads GRG. Mg(2+) contacts are provided by asparagine 209 and aspartate 223. Residues asparagine 274 and 331–333 contribute to the substrate site; that span reads GIM.

The protein belongs to the succinate/malate CoA ligase beta subunit family. In terms of assembly, heterotetramer of two alpha and two beta subunits. Mg(2+) serves as cofactor.

It catalyses the reaction succinate + ATP + CoA = succinyl-CoA + ADP + phosphate. It carries out the reaction GTP + succinate + CoA = succinyl-CoA + GDP + phosphate. It participates in carbohydrate metabolism; tricarboxylic acid cycle; succinate from succinyl-CoA (ligase route): step 1/1. Succinyl-CoA synthetase functions in the citric acid cycle (TCA), coupling the hydrolysis of succinyl-CoA to the synthesis of either ATP or GTP and thus represents the only step of substrate-level phosphorylation in the TCA. The beta subunit provides nucleotide specificity of the enzyme and binds the substrate succinate, while the binding sites for coenzyme A and phosphate are found in the alpha subunit. This Agrobacterium fabrum (strain C58 / ATCC 33970) (Agrobacterium tumefaciens (strain C58)) protein is Succinate--CoA ligase [ADP-forming] subunit beta.